We begin with the raw amino-acid sequence, 324 residues long: Dolichyl-phosphate beta-glucosyltransferase (324 aa).

Residues 1 to 7 (MAPLLLQ) are Lumenal-facing. A helical; Signal-anchor for type II membrane protein membrane pass occupies residues 8–28 (LAVLGAALAAAALVLISIVAF). At 29 to 324 (TTATKMPALH…WRLEQTRKMN (296 aa)) the chain is on the cytoplasmic side.

The protein belongs to the glycosyltransferase 2 family. In terms of tissue distribution, expressed in pancreas, placenta, liver, heart, brain, kidney, skeletal muscle, and lung.

The protein resides in the endoplasmic reticulum membrane. It carries out the reaction a di-trans,poly-cis-dolichyl phosphate + UDP-alpha-D-glucose = a di-trans,poly-cis-dolichyl beta-D-glucosyl phosphate + UDP. It functions in the pathway protein modification; protein glycosylation. Its function is as follows. Dolichyl-phosphate beta-glucosyltransferase that operates in the biosynthetic pathway of dolichol-linked oligosaccharides, the glycan precursors employed in protein asparagine (N)-glycosylation. The assembly of dolichol-linked oligosaccharides begins on the cytosolic side of the endoplasmic reticulum membrane and finishes in its lumen. The sequential addition of sugars to dolichol pyrophosphate produces dolichol-linked oligosaccharides containing fourteen sugars, including two GlcNAcs, nine mannoses and three glucoses. Once assembled, the oligosaccharide is transferred from the lipid to nascent proteins by oligosaccharyltransferases. Dolichyl-phosphate beta-glucosyltransferase produces dolichyl beta-D-glucosyl phosphate/Dol-P-Glc, the glucose donor substrate used sequentially by ALG6, ALG8 and ALG10 to add glucose residues on top of the Man(9)GlcNAc(2)-PP-Dol structure. These are the three last steps in the biosynthetic pathway of dolichol-linked oligosaccharides to produce Glc(3)Man(9)GlcNAc(2)-PP-Dol. The enzyme is most probably active on the cytoplasmic side of the endoplasmic reticulum while its product Dol-P-Glc is the substrate for ALG6, ALG8 and ALG11 in the lumen of the endoplasmic reticulum. The polypeptide is Dolichyl-phosphate beta-glucosyltransferase (Homo sapiens (Human)).